We begin with the raw amino-acid sequence, 431 residues long: 5-methylthioadenosine/S-adenosylhomocysteine deaminase (431 aa).

Zn(2+) contacts are provided by His-64 and His-66. Substrate is bound by residues Glu-93, Arg-145, and His-183. A Zn(2+)-binding site is contributed by His-210. Substrate contacts are provided by Glu-213 and Asp-299. Position 299 (Asp-299) interacts with Zn(2+).

This sequence belongs to the metallo-dependent hydrolases superfamily. MTA/SAH deaminase family. Zn(2+) is required as a cofactor.

It carries out the reaction S-adenosyl-L-homocysteine + H2O + H(+) = S-inosyl-L-homocysteine + NH4(+). The enzyme catalyses S-methyl-5'-thioadenosine + H2O + H(+) = S-methyl-5'-thioinosine + NH4(+). Functionally, catalyzes the deamination of 5-methylthioadenosine and S-adenosyl-L-homocysteine into 5-methylthioinosine and S-inosyl-L-homocysteine, respectively. Is also able to deaminate adenosine. This is 5-methylthioadenosine/S-adenosylhomocysteine deaminase from Syntrophomonas wolfei subsp. wolfei (strain DSM 2245B / Goettingen).